The chain runs to 209 residues: uncharacterized protein (209 aa).

A coiled-coil region spans residues 39–75 (VSFENFMERYDTMEKNIQDLQNKYEEMANNLVAVMAD). The tract at residues 103 to 131 (TMKDATSLPPPNPNNEQSVFTNGSPTSGK) is disordered. Positions 116 to 129 (NNEQSVFTNGSPTS) are enriched in polar residues.

This sequence belongs to the asfivirus K205R family.

The protein resides in the host cytoplasm. Its function is as follows. Induces host endoplasmic reticulum stress and consequently activates autophagy and NF-kappa-B signaling pathway. In turn, may induce autophagy-mediated STING1 degradation and innate immune evasion. This is an uncharacterized protein from Ornithodoros (relapsing fever ticks).